The primary structure comprises 341 residues: tRNA N6-adenosine threonylcarbamoyltransferase (341 aa).

Residues His-117 and His-121 each coordinate Fe cation. Substrate is bound by residues 140-144, Asp-173, Gly-186, and Asn-278; that span reads VVSGG. Asp-306 contacts Fe cation.

This sequence belongs to the KAE1 / TsaD family. Fe(2+) is required as a cofactor.

It localises to the cytoplasm. The enzyme catalyses L-threonylcarbamoyladenylate + adenosine(37) in tRNA = N(6)-L-threonylcarbamoyladenosine(37) in tRNA + AMP + H(+). Functionally, required for the formation of a threonylcarbamoyl group on adenosine at position 37 (t(6)A37) in tRNAs that read codons beginning with adenine. Is involved in the transfer of the threonylcarbamoyl moiety of threonylcarbamoyl-AMP (TC-AMP) to the N6 group of A37, together with TsaE and TsaB. TsaD likely plays a direct catalytic role in this reaction. This is tRNA N6-adenosine threonylcarbamoyltransferase from Symbiobacterium thermophilum (strain DSM 24528 / JCM 14929 / IAM 14863 / T).